A 145-amino-acid polypeptide reads, in one-letter code: Hemoglobin subunit beta-2 (145 aa).

The region spanning H2–H145 is the Globin domain. 2 residues coordinate heme b: H63 and H91.

This sequence belongs to the globin family. As to expression, red blood cells.

The sequence is that of Hemoglobin subunit beta-2 from Telmatobius peruvianus (Andean frog).